Reading from the N-terminus, the 331-residue chain is MSSVKQSAQAATSDVVDTAKNATAETVTAATDFLHTPAVRAALPFINGGLSGMVATTVIQPIDMIKVRIQLAGEGKAGGPKPTPLGVTRDIIASGKAMDLYTGLSAGLLRQAVYTTARIGCFDTFMSRLSARAKEKGQSVGFKERASAGLAAGGLAAMIGNPADLALIRMQSDGLKPVAERKNYKSVIDALGGIARNEGVAALWAGAAPTVVRAMALNFGQLAFFSEAKAQLKARTQWSSKVQTLSASAIAGFFASFFSLPFDFVKTRLQKQTRGPDGKLPYNGMVDCFAKVAKQEGVFRFYRGFGTYYVRIAPHAMVTLLVADYLGWLTK.

Solcar repeat units lie at residues 39-128 (VRAA…FMSR), 140-231 (VGFK…AKAQ), and 239-329 (SSKV…LGWL). The next 6 membrane-spanning stretches (helical) occupy residues 42–62 (ALPF…IQPI), 103–121 (GLSA…RIGC), 148–168 (AGLA…LALI), 199–219 (GVAA…ALNF), 245–265 (LSAS…FDFV), and 309–329 (YVRI…LGWL).

It belongs to the mitochondrial carrier (TC 2.A.29) family.

It is found in the mitochondrion inner membrane. Functionally, catalyzes the transport of 2-oxoglutarate across the inner mitochondrial membrane. This is Putative mitochondrial 2-oxoglutarate/malate carrier protein (mic-33) from Neurospora crassa (strain ATCC 24698 / 74-OR23-1A / CBS 708.71 / DSM 1257 / FGSC 987).